Consider the following 323-residue polypeptide: Arginase, hepatic (323 aa).

The Mn(2+) site is built by His102, Asp125, His127, and Asp129. Residues 127–131 (HADIN), 138–140 (SGN), and Asp184 contribute to the substrate site. Mn(2+) contacts are provided by Asp233 and Asp235. Residues Thr247 and Glu278 each coordinate substrate.

Belongs to the arginase family. As to quaternary structure, homotrimer. Mn(2+) is required as a cofactor.

The enzyme catalyses L-arginine + H2O = urea + L-ornithine. Its pathway is nitrogen metabolism; urea cycle; L-ornithine and urea from L-arginine: step 1/1. This is Arginase, hepatic from Aquarana catesbeiana (American bullfrog).